A 373-amino-acid polypeptide reads, in one-letter code: SWI/SNF-related matrix-associated actin-dependent regulator of chromatin subfamily B member 1 (373 aa).

The interval 1–101 (MALSKAFGQK…DEKYKAVSIS (101 aa)) is DNA-binding.

The protein belongs to the SNF5 family. In terms of assembly, component of the multiprotein chromatin-remodeling complexes SWI/SNF. Component of neural progenitors-specific chromatin remodeling complex (npBAF complex) and the neuron-specific chromatin remodeling complex (nBAF complex). Component of the BAF (SWI/SNF) chromatin remodeling complex. Component of the SWI/SNF-B (PBAF) chromatin remodeling complex. Binds to double-stranded DNA.

It is found in the nucleus. Involved in chromatin-remodeling. Core component of the BAF (SWI/SNF) complex. This ATP-dependent chromatin-remodeling complex plays important roles in cell proliferation and differentiation, in cellular antiviral activities and inhibition of tumor formation. Belongs to the neural progenitors-specific chromatin remodeling complex (npBAF complex) and the neuron-specific chromatin remodeling complex (nBAF complex) and may play a role in neural development. This chain is SWI/SNF-related matrix-associated actin-dependent regulator of chromatin subfamily B member 1 (smarcb1), found in Dichotomyctere fluviatilis (Green pufferfish).